The primary structure comprises 859 residues: Active breakpoint cluster region-related protein (859 aa).

The interval 26–84 (TDEYDGEGNEEQKGPPEGSETMPYIDESPTMSPQLSARSQGGGDGVSPTPPEGLAPGVE) is disordered. The segment covering 54–64 (PTMSPQLSARS) has biased composition (polar residues). Serine 57 is subject to Phosphoserine. Positions 91–284 (MRKLVLSGFL…QNFLSSINED (194 aa)) constitute a DH domain. A PH domain is found at 301–459 (QLVKDGFLVE…WREAIQKLQK (159 aa)). The C2 domain maps to 484–613 (TVHNIPVTSN…ETKNWHTDVI (130 aa)). Residues 647–845 (VKISVVTKRE…YYLQHPPISF (199 aa)) form the Rho-GAP domain.

Interacts with DLG4. As to expression, highly enriched in the brain. Much weaker expression in heart, lung and muscle.

The protein localises to the cell projection. It is found in the dendritic spine. It localises to the axon. Its subcellular location is the synapse. Functionally, protein with a unique structure having two opposing regulatory activities toward small GTP-binding proteins. The C-terminus is a GTPase-activating protein domain which stimulates GTP hydrolysis by RAC1, RAC2 and CDC42. Accelerates the intrinsic rate of GTP hydrolysis of RAC1 or CDC42, leading to down-regulation of the active GTP-bound form. The central Dbl homology (DH) domain functions as a guanine nucleotide exchange factor (GEF) that modulates the GTPases CDC42, RHOA and RAC1. Promotes the conversion of CDC42, RHOA and RAC1 from the GDP-bound to the GTP-bound form. Functions as an important negative regulator of neuronal RAC1 activity. Regulates macrophage functions such as CSF-1 directed motility and phagocytosis through the modulation of RAC1 activity. The chain is Active breakpoint cluster region-related protein from Homo sapiens (Human).